Reading from the N-terminus, the 594-residue chain is Probable Xaa-Pro aminopeptidase P (594 aa).

4 residues coordinate Mn(2+): Asp391, Asp402, Glu500, and Glu514.

The protein belongs to the peptidase M24B family. Mn(2+) is required as a cofactor.

The catalysed reaction is Release of any N-terminal amino acid, including proline, that is linked to proline, even from a dipeptide or tripeptide.. Functionally, catalyzes the removal of a penultimate prolyl residue from the N-termini of peptides. This is Probable Xaa-Pro aminopeptidase P (ampp) from Pyrenophora tritici-repentis (strain Pt-1C-BFP) (Wheat tan spot fungus).